Here is a 543-residue protein sequence, read N- to C-terminus: Phenylalanine--tRNA ligase beta subunit (543 aa).

One can recognise a B5 domain in the interval 269-344 (FDFRIMRPAR…KSKGIENIEE (76 aa)). Mg(2+) contacts are provided by Asp-322, Asp-328, Glu-331, and Asp-332.

The protein belongs to the phenylalanyl-tRNA synthetase beta subunit family. Type 2 subfamily. As to quaternary structure, tetramer of two alpha and two beta subunits. Requires Mg(2+) as cofactor.

It localises to the cytoplasm. The enzyme catalyses tRNA(Phe) + L-phenylalanine + ATP = L-phenylalanyl-tRNA(Phe) + AMP + diphosphate + H(+). This is Phenylalanine--tRNA ligase beta subunit from Thermoplasma acidophilum (strain ATCC 25905 / DSM 1728 / JCM 9062 / NBRC 15155 / AMRC-C165).